The following is a 120-amino-acid chain: NAD(P)H-quinone oxidoreductase subunit 3, chloroplastic (120 aa).

The next 3 membrane-spanning stretches (helical) occupy residues 9-29 (IFWA…LISG), 64-84 (MFAL…PWAM), and 88-108 (VLGV…IVGS).

This sequence belongs to the complex I subunit 3 family. As to quaternary structure, NDH is composed of at least 16 different subunits, 5 of which are encoded in the nucleus.

Its subcellular location is the plastid. The protein localises to the chloroplast thylakoid membrane. The enzyme catalyses a plastoquinone + NADH + (n+1) H(+)(in) = a plastoquinol + NAD(+) + n H(+)(out). It catalyses the reaction a plastoquinone + NADPH + (n+1) H(+)(in) = a plastoquinol + NADP(+) + n H(+)(out). NDH shuttles electrons from NAD(P)H:plastoquinone, via FMN and iron-sulfur (Fe-S) centers, to quinones in the photosynthetic chain and possibly in a chloroplast respiratory chain. The immediate electron acceptor for the enzyme in this species is believed to be plastoquinone. Couples the redox reaction to proton translocation, and thus conserves the redox energy in a proton gradient. In Platanus occidentalis (Sycamore), this protein is NAD(P)H-quinone oxidoreductase subunit 3, chloroplastic.